The following is an 88-amino-acid chain: Homeobox protein knotted-1-like 1 (88 aa).

The region spanning 4-24 is the ELK domain; it reads ELKLELKQGFKSRIEDVREEI. Positions 25–88 form a DNA-binding region, homeobox; TALE-type; sequence LRKRRAGKLP…NQRKRNWHNN (64 aa).

This sequence belongs to the TALE/KNOX homeobox family. Highly expressed in the roots.

It localises to the nucleus. The polypeptide is Homeobox protein knotted-1-like 1 (KNOX1) (Zea mays (Maize)).